A 337-amino-acid polypeptide reads, in one-letter code: Centromere protein N (337 aa).

Serine 226 and serine 233 each carry phosphoserine.

This sequence belongs to the CENP-N/CHL4 family. As to quaternary structure, component of the CENPA-NAC complex, at least composed of CENPA, CENPC, CENPH, CENPM, CENPN, CENPT and CENPU. The CENPA-NAC complex interacts with the CENPA-CAD complex, composed of CENPI, CENPK, CENPL, CENPO, CENPP, CENPQ, CENPR and CENPS. Interacts directly with CENPA. Identified in a centromere complex containing histones H2A, H2B and H4, and at least CENPA, CENPB, CENPC, CENPT, CENPN, HJURP, SUPT16H, SSRP1 and RSF1.

The protein resides in the nucleus. The protein localises to the chromosome. It localises to the centromere. Its subcellular location is the kinetochore. In terms of biological role, component of the CENPA-NAC (nucleosome-associated) complex, a complex that plays a central role in assembly of kinetochore proteins, mitotic progression and chromosome segregation. The CENPA-NAC complex recruits the CENPA-CAD (nucleosome distal) complex and may be involved in incorporation of newly synthesized CENPA into centromeres. CENPN is the first protein to bind specifically to CENPA nucleosomes and the direct binding of CENPA nucleosomes by CENPN is required for centromere assembly. Required for chromosome congression and efficiently align the chromosomes on a metaphase plate. The polypeptide is Centromere protein N (Cenpn) (Mus musculus (Mouse)).